The chain runs to 246 residues: Acetoacetate decarboxylase (246 aa).

The active-site Schiff-base intermediate with acetoacetate is the lysine 116.

It belongs to the ADC family.

It carries out the reaction acetoacetate + H(+) = acetone + CO2. Catalyzes the conversion of acetoacetate to acetone and carbon dioxide. The polypeptide is Acetoacetate decarboxylase (Burkholderia vietnamiensis (strain G4 / LMG 22486) (Burkholderia cepacia (strain R1808))).